The chain runs to 356 residues: Nuclear hormone receptor family member nhr-169 (356 aa).

Positions aspartate 16 to glutamate 90 form a DNA-binding region, nuclear receptor. 2 consecutive NR C4-type zinc fingers follow at residues cysteine 19 to cysteine 40 and cysteine 56 to cysteine 72. The NR LBD domain occupies aspartate 144–phenylalanine 356.

The protein belongs to the nuclear hormone receptor family.

The protein resides in the nucleus. Orphan nuclear receptor. The polypeptide is Nuclear hormone receptor family member nhr-169 (nhr-169) (Caenorhabditis elegans).